The primary structure comprises 265 residues: MADS-box protein JOINTLESS (265 aa).

One can recognise an MADS-box domain in the interval 3–57 (REKIQIKKIDNSTARQVTFSKRRRGLFKKAEELSVLCDADVALIIFSSTGKLFDY). Residues 87–177 (QLVENSNYSR…RQQVMEISNN (91 aa)) form the K-box domain. Residues 196-232 (ENGFNNNNNEDGQSSESVTNPCNSIDPPPQDDDSSDT) are disordered. The segment covering 205–218 (EDGQSSESVTNPCN) has biased composition (polar residues).

In terms of tissue distribution, widely expressed with highest levels in shoot tips and axillary buds. Also found in fully developed pedicels and flowers.

It is found in the nucleus. Putative transcription factor that coordinates gene expression underlying the differentiation of the pedicel abscission zone. May also be involved in the maintenance of the inflorescence meristem state. The polypeptide is MADS-box protein JOINTLESS (J) (Solanum lycopersicum (Tomato)).